A 457-amino-acid chain; its full sequence is Tryptophan aminotransferase-related protein 3 (457 aa).

The helical transmembrane segment at 6–26 (LLIAGSIILNLVFTIHILYNN) threads the bilayer. Pyridoxal 5'-phosphate-binding positions include tyrosine 123, 163–164 (AT), asparagine 237, 257–260 (DYAY), 280–283 (SLSK), and arginine 291. The residue at position 283 (lysine 283) is an N6-(pyridoxal phosphate)lysine.

Belongs to the alliinase family. The cofactor is pyridoxal 5'-phosphate.

The protein localises to the membrane. In terms of biological role, probable aminotransferase. This Arabidopsis thaliana (Mouse-ear cress) protein is Tryptophan aminotransferase-related protein 3 (TAR3).